We begin with the raw amino-acid sequence, 349 residues long: tRNA pseudouridine synthase D (349 aa).

F27 contributes to the substrate binding site. The active-site Nucleophile is the D80. Residue N129 participates in substrate binding. Residues 155 to 303 (GVPNYFGAQR…VEAARRAMLL (149 aa)) enclose the TRUD domain. F329 serves as a coordination point for substrate.

Belongs to the pseudouridine synthase TruD family.

It catalyses the reaction uridine(13) in tRNA = pseudouridine(13) in tRNA. Responsible for synthesis of pseudouridine from uracil-13 in transfer RNAs. The chain is tRNA pseudouridine synthase D from Escherichia coli O8 (strain IAI1).